A 61-amino-acid polypeptide reads, in one-letter code: Protein transport protein Sec61 subunit beta (61 aa).

Topologically, residues 1-35 (MKRPSTQRAPATVNKGGNSMMKFYSEDAIGLKVGP) are cytoplasmic. Residues 36–56 (TAVLFMSLIFIAFVIILHIMG) form a helical membrane-spanning segment. Topologically, residues 57–61 (KYTRS) are extracellular.

Belongs to the SEC61-beta family. As to quaternary structure, the SEC61 channel-forming translocon complex.

It is found in the endoplasmic reticulum membrane. Its function is as follows. Component of SEC61 channel-forming translocon complex that mediates transport of signal peptide-containing precursor polypeptides across the endoplasmic reticulum (ER). Forms a ribosome receptor and a gated pore in the ER membrane, both functions required for cotranslational translocation of nascent polypeptides. This chain is Protein transport protein Sec61 subunit beta (sec61b), found in Dictyostelium discoideum (Social amoeba).